The chain runs to 215 residues: Nascent polypeptide-associated complex subunit alpha (215 aa).

Residues 1–81 (MPGEATETVP…SEKKARKAMS (81 aa)) form a disordered region. The span at 9–28 (VPATEQELPQPQAETGSGTE) shows a compositional bias: polar residues. Acidic residues predominate over residues 29-42 (SDSDESVPELEEQD). Residue Ser43 is modified to Phosphoserine; by ILK1. The segment covering 44-57 (TQTATQQAQLAAAA) has biased composition (low complexity). Residues 69-80 (QSRSEKKARKAM) form a required for DNA-binding region. In terms of domain architecture, NAC-A/B spans 70-135 (SRSEKKARKA…AKIEDLSQQA (66 aa)). Positions 93–108 (RVTIRKSKNILFVITK) are RNA/DNA-binding. A Phosphoserine modification is found at Ser132. N6-acetyllysine; alternate is present on Lys142. Lys142 is covalently cross-linked (Glycyl lysine isopeptide (Lys-Gly) (interchain with G-Cter in SUMO2); alternate). Thr159 carries the phosphothreonine; by GSK3-beta modification. Phosphothreonine is present on Thr161. A phosphoserine mark is found at Ser166, Ser186, Ser191, and Ser203. Residues 176–213 (VEVKDIELVMSQANVSRAKAVRALKNNSNDIVNAIMEL) form the UBA domain.

It belongs to the NAC-alpha family. As to quaternary structure, part of the nascent polypeptide-associated complex (NAC), which is a heterodimer of NACA and BTF3 (via NAC-A/B domains). NAC associates with ribosomes through the BTF3/NACB subunit and contacts the ribosomal protein L23, which is positioned near the exiting site. Both subunits can contact nascent polypeptide chains. NACA may also form homodimers, and only this form binds DNA. Interacts with TBP and JUN. Post-translationally, phosphorylation of Ser-43 by ILK during cell adhesion may promote nuclear localization. Phosphorylation of Thr-159 by GSK3B may promote proteasome mediated degradation. In terms of tissue distribution, isoform 1 appears to be ubiquitously expressed.

Its subcellular location is the cytoplasm. It localises to the nucleus. Its function is as follows. Prevents inappropriate targeting of non-secretory polypeptides to the endoplasmic reticulum (ER). Binds to nascent polypeptide chains as they emerge from the ribosome and blocks their interaction with the signal recognition particle (SRP), which normally targets nascent secretory peptides to the ER. Also reduces the inherent affinity of ribosomes for protein translocation sites in the ER membrane (M sites). Isoform 1 and isoform 2 appear to bind DNA and play roles in transcription. Isoform 1 may function as a specific coactivator for JUN, acting to stabilize the interaction of JUN homodimers with promoter elements. The sequence is that of Nascent polypeptide-associated complex subunit alpha (Naca) from Mus musculus (Mouse).